We begin with the raw amino-acid sequence, 597 residues long: MGEALNGLKRNIMCGDARESHIGQKVTVMGWVQRNRNLGGLQFIDLRDREGILQVVFNDDLGEEILEKAKSIRPEYCIAVTGEIVKRESVNPNMPTGMVELKAEELKILSESDTPPIYIKEDLDAAESIRLKYRYLDLRRPDMQNIFKIRHKTTKAIRDYLDQNGFLEMETPILTKSTPEGARDYLVPSRNYPGMFYALPQSPQLFKQLLMVSGFDRYFQIVKCFRDEDLRANRQPEFTQVDLEMSFVEQDDVMALNECLIKHVFKEVLGVDVKTPIKRMTFKDAMEKYGSDKPDLRFGMEITNLSDVVKECGFKVFTDAVANGGSVRGLCLEGGASMGRKDIDRLGEFVKTFKAKGLAWIQLKEEGVKSPIAKFFSEEELNKIIETMGAKTGDLILIVADKNSVVLKALGELRLELSRKFDLVKDKSEFNFTWITEFDLLEYDEEEGRYFAAHHPFTMPMDEDIKYLDTDPGRVRAKAYDLVLNGEELGGGSIRIHDTKLQEKMFEVLGFTQESAWERFGFLLEAFKFGPPPHGGLAFGLDRMIMFLAGTENIKDVITFPKNQNAFCYLTEAPNIVDEEQLKELGIETIKKEDTAE.

Residue Glu180 participates in L-aspartate binding. The interval 204 to 207 is aspartate; the sequence is QLFK. Arg226 is an L-aspartate binding site. ATP-binding positions include 226-228 and Gln235; that span reads RDE. His454 serves as a coordination point for L-aspartate. Glu488 provides a ligand contact to ATP. Arg495 is a binding site for L-aspartate. 540 to 543 is an ATP binding site; the sequence is GLDR.

It belongs to the class-II aminoacyl-tRNA synthetase family. Type 1 subfamily. As to quaternary structure, homodimer.

It is found in the cytoplasm. The enzyme catalyses tRNA(Asp) + L-aspartate + ATP = L-aspartyl-tRNA(Asp) + AMP + diphosphate. Functionally, catalyzes the attachment of L-aspartate to tRNA(Asp) in a two-step reaction: L-aspartate is first activated by ATP to form Asp-AMP and then transferred to the acceptor end of tRNA(Asp). This is Aspartate--tRNA ligase from Clostridium perfringens (strain SM101 / Type A).